A 493-amino-acid polypeptide reads, in one-letter code: Cytochrome P450 2E1 (493 aa).

298–303 (FAGTET) is a substrate binding site. Residue C437 participates in heme binding.

The protein belongs to the cytochrome P450 family. Interacts with chaperones HSP70 and HSP90; this interaction is required for initial targeting to mitochondria. Heme is required as a cofactor.

The protein localises to the endoplasmic reticulum membrane. It is found in the microsome membrane. Its subcellular location is the mitochondrion inner membrane. It carries out the reaction an organic molecule + reduced [NADPH--hemoprotein reductase] + O2 = an alcohol + oxidized [NADPH--hemoprotein reductase] + H2O + H(+). The catalysed reaction is (5Z,8Z,11Z)-eicosatrienoate + reduced [NADPH--hemoprotein reductase] + O2 = 19-hydroxy-(5Z,8Z,11Z)-eicosatrienoate + oxidized [NADPH--hemoprotein reductase] + H2O + H(+). It catalyses the reaction (5Z,8Z,11Z,14Z,17Z)-eicosapentaenoate + reduced [NADPH--hemoprotein reductase] + O2 = 19-hydroxy-(5Z,8Z,11Z,14Z,17Z)-eicosapentaenoate + oxidized [NADPH--hemoprotein reductase] + H2O + H(+). The enzyme catalyses (4Z,7Z,10Z,13Z,16Z,19Z)-docosahexaenoate + reduced [NADPH--hemoprotein reductase] + O2 = 21-hydroxy-(4Z,7Z,10Z,13Z,16Z,19Z)-docosahexaenoate + oxidized [NADPH--hemoprotein reductase] + H2O + H(+). It carries out the reaction dodecanoate + reduced [NADPH--hemoprotein reductase] + O2 = 11-hydroxydodecanoate + oxidized [NADPH--hemoprotein reductase] + H2O + H(+). The catalysed reaction is tetradecanoate + reduced [NADPH--hemoprotein reductase] + O2 = 13-hydroxytetradecanoate + oxidized [NADPH--hemoprotein reductase] + H2O + H(+). It catalyses the reaction 4-nitrophenol + NADPH + O2 + H(+) = 4-nitrocatechol + NADP(+) + H2O. Its pathway is lipid metabolism; fatty acid metabolism. Its activity is regulated as follows. The omega-1 hydroxylase activity is stimulated by cytochrome b5. Its function is as follows. A cytochrome P450 monooxygenase involved in the metabolism of fatty acids. Mechanistically, uses molecular oxygen inserting one oxygen atom into a substrate, and reducing the second into a water molecule, with two electrons provided by NADPH via cytochrome P450 reductase (NADPH--hemoprotein reductase). Catalyzes the hydroxylation of carbon-hydrogen bonds. Hydroxylates fatty acids specifically at the omega-1 position displaying the highest catalytic activity for saturated fatty acids. May be involved in the oxidative metabolism of xenobiotics. This Rattus norvegicus (Rat) protein is Cytochrome P450 2E1.